A 184-amino-acid chain; its full sequence is dCTP deaminase (184 aa).

Residue 107–112 (KSTYAR) coordinates dCTP. Glu-133 (proton donor/acceptor) is an active-site residue. Residues Gln-152, Tyr-166, and Gln-176 each contribute to the dCTP site.

It belongs to the dCTP deaminase family. Homotrimer.

The catalysed reaction is dCTP + H2O + H(+) = dUTP + NH4(+). It functions in the pathway pyrimidine metabolism; dUMP biosynthesis; dUMP from dCTP (dUTP route): step 1/2. In terms of biological role, catalyzes the deamination of dCTP to dUTP. The chain is dCTP deaminase from Acidiphilium cryptum (strain JF-5).